Reading from the N-terminus, the 397-residue chain is 4-hydroxybenzoate polyprenyltransferase, mitochondrial (397 aa).

Residues 1-14 (MFAVRHLLKSRKHF) constitute a mitochondrion transit peptide. The next 9 membrane-spanning stretches (helical) occupy residues 96 to 116 (IGTY…ADAG), 121 to 141 (LTML…GCTI), 169 to 189 (FDAI…LVQL), 190 to 210 (NWQS…YPLM), 213 to 233 (VTYW…LLGW), 242 to 262 (LAAC…YDTI), 289 to 309 (VWLS…GWAC), 313 to 333 (LPYY…IYSL), and 345 to 365 (FLSN…GTLL).

It belongs to the UbiA prenyltransferase family. The cofactor is Mg(2+).

The protein localises to the mitochondrion inner membrane. It catalyses the reaction an all-trans-polyprenyl diphosphate + 4-hydroxybenzoate = a 4-hydroxy-3-(all-trans-polyprenyl)benzoate + diphosphate. The protein operates within cofactor biosynthesis; ubiquinone biosynthesis. In terms of biological role, catalyzes the prenylation of para-hydroxybenzoate (PHB) with an all-trans polyprenyl group. Mediates the second step in the final reaction sequence of coenzyme Q (CoQ) biosynthesis, which is the condensation of the polyisoprenoid side chain with PHB, generating the first membrane-bound Q intermediate. The chain is 4-hydroxybenzoate polyprenyltransferase, mitochondrial from Drosophila pseudoobscura pseudoobscura (Fruit fly).